A 504-amino-acid polypeptide reads, in one-letter code: ATP synthase subunit alpha 2 (504 aa).

Residue 169-176 (GDRQTGKT) participates in ATP binding.

The protein belongs to the ATPase alpha/beta chains family. F-type ATPases have 2 components, CF(1) - the catalytic core - and CF(0) - the membrane proton channel. CF(1) has five subunits: alpha(3), beta(3), gamma(1), delta(1), epsilon(1). CF(0) has three main subunits: a(1), b(2) and c(9-12). The alpha and beta chains form an alternating ring which encloses part of the gamma chain. CF(1) is attached to CF(0) by a central stalk formed by the gamma and epsilon chains, while a peripheral stalk is formed by the delta and b chains.

It is found in the cell membrane. It catalyses the reaction ATP + H2O + 4 H(+)(in) = ADP + phosphate + 5 H(+)(out). In terms of biological role, produces ATP from ADP in the presence of a proton gradient across the membrane. The alpha chain is a regulatory subunit. The protein is ATP synthase subunit alpha 2 of Listeria monocytogenes serotype 4b (strain F2365).